We begin with the raw amino-acid sequence, 330 residues long: Methionyl-tRNA formyltransferase (330 aa).

121–124 (SLLP) is a (6S)-5,6,7,8-tetrahydrofolate binding site.

It belongs to the Fmt family.

The catalysed reaction is L-methionyl-tRNA(fMet) + (6R)-10-formyltetrahydrofolate = N-formyl-L-methionyl-tRNA(fMet) + (6S)-5,6,7,8-tetrahydrofolate + H(+). Attaches a formyl group to the free amino group of methionyl-tRNA(fMet). The formyl group appears to play a dual role in the initiator identity of N-formylmethionyl-tRNA by promoting its recognition by IF2 and preventing the misappropriation of this tRNA by the elongation apparatus. The protein is Methionyl-tRNA formyltransferase of Burkholderia orbicola (strain MC0-3).